Consider the following 160-residue polypeptide: MTRGLVFFVSAACGVLADQLSKFIIAANLTPGTAIPESGFFQIVHVHNTGAAFSIFRGHTEWLIAASCLGVILALTAFFLRKKLPFLDTRPGVAALGIILAGTIGNLIDRVRLGYVTDFIQVGNFPTFNMADSCLTLGIIWLVLLYLTSSHSGGDASENA.

A run of 2 helical transmembrane segments spans residues 60–80 (TEWLIAASCLGVILALTAFFL) and 84–104 (LPFLDTRPGVAALGIILAGTI). Catalysis depends on residues Asp118 and Asp132. The helical transmembrane segment at 127–147 (TFNMADSCLTLGIIWLVLLYL) threads the bilayer.

Belongs to the peptidase A8 family.

The protein localises to the cell membrane. It carries out the reaction Release of signal peptides from bacterial membrane prolipoproteins. Hydrolyzes -Xaa-Yaa-Zaa-|-(S,diacylglyceryl)Cys-, in which Xaa is hydrophobic (preferably Leu), and Yaa (Ala or Ser) and Zaa (Gly or Ala) have small, neutral side chains.. It participates in protein modification; lipoprotein biosynthesis (signal peptide cleavage). Its function is as follows. This protein specifically catalyzes the removal of signal peptides from prolipoproteins. The chain is Lipoprotein signal peptidase from Dehalococcoides mccartyi (strain ATCC BAA-2266 / KCTC 15142 / 195) (Dehalococcoides ethenogenes (strain 195)).